The following is a 93-amino-acid chain: Pyrimidine/purine nucleoside phosphorylase (93 aa).

Belongs to the nucleoside phosphorylase PpnP family.

The catalysed reaction is a purine D-ribonucleoside + phosphate = a purine nucleobase + alpha-D-ribose 1-phosphate. The enzyme catalyses adenosine + phosphate = alpha-D-ribose 1-phosphate + adenine. It catalyses the reaction cytidine + phosphate = cytosine + alpha-D-ribose 1-phosphate. It carries out the reaction guanosine + phosphate = alpha-D-ribose 1-phosphate + guanine. The catalysed reaction is inosine + phosphate = alpha-D-ribose 1-phosphate + hypoxanthine. The enzyme catalyses thymidine + phosphate = 2-deoxy-alpha-D-ribose 1-phosphate + thymine. It catalyses the reaction uridine + phosphate = alpha-D-ribose 1-phosphate + uracil. It carries out the reaction xanthosine + phosphate = alpha-D-ribose 1-phosphate + xanthine. Catalyzes the phosphorolysis of diverse nucleosides, yielding D-ribose 1-phosphate and the respective free bases. Can use uridine, adenosine, guanosine, cytidine, thymidine, inosine and xanthosine as substrates. Also catalyzes the reverse reactions. The polypeptide is Pyrimidine/purine nucleoside phosphorylase (Aliivibrio fischeri (strain ATCC 700601 / ES114) (Vibrio fischeri)).